We begin with the raw amino-acid sequence, 274 residues long: CTO1 family protein C17G9.12c (274 aa).

Belongs to the CTO1 family.

The protein resides in the cytoplasm. It is found in the nucleus. This Schizosaccharomyces pombe (strain 972 / ATCC 24843) (Fission yeast) protein is CTO1 family protein C17G9.12c.